A 109-amino-acid chain; its full sequence is Protein GOLVEN 5 (109 aa).

The signal sequence occupies residues 1 to 24 (MTNITSSFLCLLILLLFCLSFGYS). Residues 25–96 (LHGDKDEVLS…EEDDLVAYTA (72 aa)) constitute a propeptide that is removed on maturation. Residues 54–88 (KKAQVRGRSGQEFSKETTKMMMKKTTKKETNVEEE) are disordered. Sulfotyrosine is present on tyrosine 98. Position 106 is a hydroxyproline (proline 106).

The protein belongs to the RGF family. Binds to LRR receptor-like serine/threonine-protein kinases RGI1, RGI2 and RGI3 to trigger their dimerization with SERK proteins and subsequent signaling. As to expression, expressed in root tips.

It localises to the secreted. Signaling peptide (root growth factor) that maintains the postembryonic root stem cell niche in a PIN2-traffic dependent manner. Root growth factor that regulates the pattern of root growth and lateral root development by modulating the length and the number of cortical cells in the root apical meristem (RAM), and the anticlinal asymmetric cell divisions in lateral root initiation cells. Influences the longitudinal growth rate in the primary root in response to phosphate ion (Pi)-deprivation. The protein is Protein GOLVEN 5 of Arabidopsis thaliana (Mouse-ear cress).